Reading from the N-terminus, the 283-residue chain is Probable voltage-dependent anion-selective channel (283 aa).

This sequence belongs to the eukaryotic mitochondrial porin family.

The protein localises to the mitochondrion outer membrane. Its function is as follows. Forms a channel through the cell membrane that allows diffusion of small hydrophilic molecules. Plays a role in maintaining mitochondrial morphology. The protein is Probable voltage-dependent anion-selective channel of Caenorhabditis elegans.